The sequence spans 767 residues: Polyketide biosynthesis protein PksE (767 aa).

The tract at residues 1 to 312 (MITYVFPGQG…QRNVQAGITA (312 aa)) is acyl transferase. Residues Ser87 and His193 contribute to the active site.

It in the N-terminal section; belongs to the FabD family.

It is found in the cytoplasm. The catalysed reaction is holo-[ACP] + malonyl-CoA = malonyl-[ACP] + CoA. It participates in antibiotic biosynthesis; bacillaene biosynthesis. Its function is as follows. Probably involved in some intermediate steps for the synthesis of the antibiotic polyketide bacillaene which is involved in secondary metabolism. Probably has an acyl transferase activity and could also have a flavin mononucleotide-dependent oxidoreductase activity. The chain is Polyketide biosynthesis protein PksE (pksE) from Bacillus subtilis (strain 168).